The chain runs to 408 residues: Aspartokinase 2 (408 aa).

Lys-7–Gly-10 is an ATP binding site. Arg-25–Lys-30 is a binding site for substrate. Residue Ser-41 participates in ATP binding. Residues Thr-47 to Glu-49, Glu-74, Leu-125 to Glu-126, Arg-150 to Ser-153, and Ser-153 contribute to the substrate site. Residues Thr-173 to Asp-174 and Phe-179 to Arg-184 each bind ATP. 2 consecutive ACT domains span residues Val-264–Lys-337 and Ile-343–Val-408. Substrate is bound by residues Asn-289–Asp-291, Gln-295, Val-354–Ala-355, Leu-368–Ile-369, and Ser-375–Glu-376.

Belongs to the aspartokinase family. Tetramer consisting of 2 isoforms Alpha (catalytic and regulation) and of a homodimer of 2 isoforms Beta (regulation).

It catalyses the reaction L-aspartate + ATP = 4-phospho-L-aspartate + ADP. The protein operates within amino-acid biosynthesis; L-lysine biosynthesis via DAP pathway; (S)-tetrahydrodipicolinate from L-aspartate: step 1/4. It functions in the pathway amino-acid biosynthesis; L-methionine biosynthesis via de novo pathway; L-homoserine from L-aspartate: step 1/3. Its pathway is amino-acid biosynthesis; L-threonine biosynthesis; L-threonine from L-aspartate: step 1/5. Its activity is regulated as follows. Lysine-sensitive. Regulated by degradation in response to starvation of cells for various nutrients. Ammonium starvation induced the fastest aspartokinase II decline, followed by amino acid starvation and glucose limitation. Catalyzes the phosphorylation of the beta-carboxyl group of aspartic acid with ATP to yield 4-phospho-L-aspartate, which is involved in the branched biosynthetic pathway leading to the biosynthesis of amino acids threonine, isoleucine and methionine. In Bacillus subtilis (strain 168), this protein is Aspartokinase 2 (lysC).